The chain runs to 270 residues: Expansin-B10 (270 aa).

Residues 1 to 31 (MAVNVRTMWSSMRAQVAMVVALVFLVRGAWC) form the signal peptide. The N-linked (GlcNAc...) asparagine glycan is linked to Asn41. The 107-residue stretch at 70–176 (GGGCGYKDVN…RRVKCKYDSK (107 aa)) folds into the Expansin-like EG45 domain. 3 disulfides stabilise this stretch: Cys73–Cys101, Cys104–Cys171, and Cys109–Cys115. The Expansin-like CBD domain occupies 188–269 (NYLALLVKYV…NWKANTAYTA (82 aa)).

Belongs to the expansin family. Expansin B subfamily. Expressed in pollen.

The protein resides in the secreted. The protein localises to the cell wall. Its subcellular location is the membrane. Its function is as follows. May aid fertilization by loosening the cell wall of the stigma and style, thereby facilitating penetration of the pollen tube. Acts selectively on grass cell walls, which are relatively poor in pectins and xyloglucans and rich in glucuronoarabinoxylans and (1-3),(1-4)-beta-D-glucans, when compared with cell walls of other angiosperms, including other monocots. The sequence is that of Expansin-B10 (EXPB10) from Zea mays (Maize).